The following is a 163-amino-acid chain: Deoxyuridine 5'-triphosphate nucleotidohydrolase (163 aa).

Residues 78 to 80 (RSG), N91, and 95 to 97 (TVD) each bind substrate. Basic and acidic residues predominate over residues 140-151 (ERESLNETERGD). The tract at residues 140–163 (ERESLNETERGDGGFGHTGVNSQP) is disordered.

Belongs to the dUTPase family. Mg(2+) is required as a cofactor.

The catalysed reaction is dUTP + H2O = dUMP + diphosphate + H(+). It participates in pyrimidine metabolism; dUMP biosynthesis; dUMP from dCTP (dUTP route): step 2/2. This enzyme is involved in nucleotide metabolism: it produces dUMP, the immediate precursor of thymidine nucleotides and it decreases the intracellular concentration of dUTP so that uracil cannot be incorporated into DNA. In Heliobacterium modesticaldum (strain ATCC 51547 / Ice1), this protein is Deoxyuridine 5'-triphosphate nucleotidohydrolase.